The primary structure comprises 413 residues: Serine hydroxymethyltransferase (413 aa).

(6S)-5,6,7,8-tetrahydrofolate-binding positions include L119 and 123-125 (GHL). K228 carries the post-translational modification N6-(pyridoxal phosphate)lysine.

This sequence belongs to the SHMT family. Homodimer. The cofactor is pyridoxal 5'-phosphate.

It localises to the cytoplasm. The enzyme catalyses (6R)-5,10-methylene-5,6,7,8-tetrahydrofolate + glycine + H2O = (6S)-5,6,7,8-tetrahydrofolate + L-serine. It functions in the pathway one-carbon metabolism; tetrahydrofolate interconversion. It participates in amino-acid biosynthesis; glycine biosynthesis; glycine from L-serine: step 1/1. Functionally, catalyzes the reversible interconversion of serine and glycine with tetrahydrofolate (THF) serving as the one-carbon carrier. This reaction serves as the major source of one-carbon groups required for the biosynthesis of purines, thymidylate, methionine, and other important biomolecules. Also exhibits THF-independent aldolase activity toward beta-hydroxyamino acids, producing glycine and aldehydes, via a retro-aldol mechanism. The polypeptide is Serine hydroxymethyltransferase (Desulfatibacillum aliphaticivorans).